Consider the following 332-residue polypeptide: L-lactate dehydrogenase A chain (332 aa).

NAD(+) contacts are provided by residues 29–57 (GAVG…VEDK) and Arg99. The substrate site is built by Arg106, Asn138, and Arg169. Residue Asn138 participates in NAD(+) binding. His193 acts as the Proton acceptor in catalysis. Position 248 (Thr248) interacts with substrate.

This sequence belongs to the LDH/MDH superfamily. LDH family. As to quaternary structure, homotetramer.

It is found in the cytoplasm. The catalysed reaction is (S)-lactate + NAD(+) = pyruvate + NADH + H(+). It participates in fermentation; pyruvate fermentation to lactate; (S)-lactate from pyruvate: step 1/1. Its function is as follows. Interconverts simultaneously and stereospecifically pyruvate and lactate with concomitant interconversion of NADH and NAD(+). The protein is L-lactate dehydrogenase A chain (LDHA) of Alligator mississippiensis (American alligator).